Reading from the N-terminus, the 313-residue chain is D-alanine--D-alanine ligase (313 aa).

Positions 108 to 308 (KLVWQQTGVP…YSELVVKVLS (201 aa)) constitute an ATP-grasp domain. ATP is bound at residue 138–193 (VAKLGLPLFVKPASEGSSVAVLKVKTADALPAALAEAATHDKIVIVEKSIEGGGEY). The Mg(2+) site is built by Asp-262, Glu-275, and Asn-277.

Belongs to the D-alanine--D-alanine ligase family. The cofactor is Mg(2+). Mn(2+) is required as a cofactor.

Its subcellular location is the cytoplasm. It carries out the reaction 2 D-alanine + ATP = D-alanyl-D-alanine + ADP + phosphate + H(+). It functions in the pathway cell wall biogenesis; peptidoglycan biosynthesis. Functionally, cell wall formation. This is D-alanine--D-alanine ligase from Burkholderia orbicola (strain MC0-3).